The chain runs to 97 residues: Sugar transporter SemiSWEET (97 aa).

In terms of domain architecture, PQ-loop spans 4-70 (IERIGKALEP…IYGIYHKNPT (67 aa)). 3 helical membrane-spanning segments follow: residues 15–35 (MLVMGLISPLATMPQLYKLYV), 44–65 (LSLTTWLLYSFIALLWTIYGIY), and 71–91 (IWVGNCLGFLMYVAMVVGIIA).

Homodimer.

The protein resides in the cell membrane. Its function is as follows. The homodimer mediates transmembrane sugar transport down a concentration gradient. Transport is probably effected by rocking-type movements, where a cargo-binding cavity opens first on one and then on the other side of the membrane. The sequence is that of Sugar transporter SemiSWEET from Vibrio sp. (strain N418).